The chain runs to 1396 residues: DNA-directed RNA polymerase subunit beta' (1396 aa).

The Zn(2+) site is built by C70, C72, C85, and C88. Mg(2+)-binding residues include D460, D462, and D464. 4 residues coordinate Zn(2+): C807, C881, C888, and C891. A compositionally biased stretch (acidic residues) spans 1361–1378 (EPEEIEEPVPEDLEDETA). Residues 1361–1396 (EPEEIEEPVPEDLEDETAGADSAQAASEESVAEGKD) are disordered. Positions 1379–1389 (GADSAQAASEE) are enriched in low complexity.

The protein belongs to the RNA polymerase beta' chain family. The RNAP catalytic core consists of 2 alpha, 1 beta, 1 beta' and 1 omega subunit. When a sigma factor is associated with the core the holoenzyme is formed, which can initiate transcription. The cofactor is Mg(2+). Zn(2+) is required as a cofactor.

The enzyme catalyses RNA(n) + a ribonucleoside 5'-triphosphate = RNA(n+1) + diphosphate. In terms of biological role, DNA-dependent RNA polymerase catalyzes the transcription of DNA into RNA using the four ribonucleoside triphosphates as substrates. The protein is DNA-directed RNA polymerase subunit beta' of Syntrophotalea carbinolica (strain DSM 2380 / NBRC 103641 / GraBd1) (Pelobacter carbinolicus).